A 1835-amino-acid polypeptide reads, in one-letter code: Protein TIC 214 (1835 aa).

6 consecutive transmembrane segments (helical) span residues 25 to 45 (VGLYYGFLTTFSIGPSYLFLL), 64 to 84 (FITGQLMMFISIYYAPLHLAL), 87 to 107 (PHTITVLVLPYLLFHFFWNNH), 124 to 144 (LSIQCVFLNNLIFQLFNHFIL), 172 to 192 (VGWLIGHIFFMKWVGLVLFWI), and 221 to 241 (IFSILLFITCVYYLGRIPSPI). Basic and acidic residues predominate over residues 246–258 (LKETSETEERGES). Disordered stretches follow at residues 246-304 (LKET…DGNQ), 735-759 (EFKTSDSEEKEAKEKEKTKEEKKEE), and 1535-1578 (NRNQ…KRQS). Residues 259–268 (AEETDVEIET) show a composition bias toward acidic residues. A compositionally biased stretch (basic and acidic residues) spans 1553–1569 (PRNRQKDLEKDYAESDI).

It belongs to the TIC214 family. Part of the Tic complex.

The protein resides in the plastid. It is found in the chloroplast inner membrane. In terms of biological role, involved in protein precursor import into chloroplasts. May be part of an intermediate translocation complex acting as a protein-conducting channel at the inner envelope. This chain is Protein TIC 214, found in Liriodendron tulipifera (Tuliptree).